We begin with the raw amino-acid sequence, 389 residues long: 8-amino-7-oxononanoate synthase (389 aa).

Substrate is bound at residue R19. Position 106–107 (106–107 (GY)) interacts with pyridoxal 5'-phosphate. H131 lines the substrate pocket. Positions 176, 204, and 233 each coordinate pyridoxal 5'-phosphate. N6-(pyridoxal phosphate)lysine is present on K236. Residue T350 coordinates substrate.

The protein belongs to the class-II pyridoxal-phosphate-dependent aminotransferase family. BioF subfamily. Homodimer. It depends on pyridoxal 5'-phosphate as a cofactor.

The catalysed reaction is 6-carboxyhexanoyl-[ACP] + L-alanine + H(+) = (8S)-8-amino-7-oxononanoate + holo-[ACP] + CO2. It participates in cofactor biosynthesis; biotin biosynthesis. In terms of biological role, catalyzes the decarboxylative condensation of pimeloyl-[acyl-carrier protein] and L-alanine to produce 8-amino-7-oxononanoate (AON), [acyl-carrier protein], and carbon dioxide. The chain is 8-amino-7-oxononanoate synthase from Ectopseudomonas mendocina (strain ymp) (Pseudomonas mendocina).